The following is a 382-amino-acid chain: Lipid-A-disaccharide synthase (382 aa).

This sequence belongs to the LpxB family.

It catalyses the reaction 2-N,3-O-bis[(3R)-3-hydroxytetradecanoyl]-alpha-D-glucosaminyl 1-phosphate + UDP-2-N,3-O-bis[(3R)-3-hydroxytetradecanoyl]-alpha-D-glucosamine = lipid A disaccharide (E. coli) + UDP + H(+). It carries out the reaction a lipid X + a UDP-2-N,3-O-bis[(3R)-3-hydroxyacyl]-alpha-D-glucosamine = a lipid A disaccharide + UDP + H(+). It functions in the pathway glycolipid biosynthesis; lipid IV(A) biosynthesis; lipid IV(A) from (3R)-3-hydroxytetradecanoyl-[acyl-carrier-protein] and UDP-N-acetyl-alpha-D-glucosamine: step 5/6. Condensation of UDP-2,3-diacylglucosamine and 2,3-diacylglucosamine-1-phosphate to form lipid A disaccharide, a precursor of lipid A, a phosphorylated glycolipid that anchors the lipopolysaccharide to the outer membrane of the cell. The protein is Lipid-A-disaccharide synthase of Escherichia coli O45:K1 (strain S88 / ExPEC).